The sequence spans 512 residues: Maturase K (512 aa).

This sequence belongs to the intron maturase 2 family. MatK subfamily.

The protein resides in the plastid. It localises to the chloroplast. Functionally, usually encoded in the trnK tRNA gene intron. Probably assists in splicing its own and other chloroplast group II introns. The protein is Maturase K of Wolffiella gladiata (Florida mud-midget).